The primary structure comprises 370 residues: Putative F-box protein At1g47390 (370 aa).

The 47-residue stretch at 1–47 (MAPEEKLPCELIEEILSRVPPESLVRFRTVSKKWNALFDDKMFINNH) folds into the F-box domain.

The sequence is that of Putative F-box protein At1g47390 from Arabidopsis thaliana (Mouse-ear cress).